The following is a 746-amino-acid chain: MSLVVDTNKRKQKGKSFYTEEQKKVMIENTVIKCILKSLKNNLGSLELLISIDSEHQFLEDYQLFLKLKERRSGTESEFPLQNTGSLEYKTEINAHVLPMPVEMGQTYDFYVEFRKKYEDAEQEPLLKRLSAEVNSIERAFHVDQTTELLILPYTTDKGNFSIKVKREAKIIRFDQIEISSEEISITGYAGYLSSENQYRIKNLNLILKKGGETPIEEKFPIKLERKTHGLENMRADGFVPELYDFEVKVPLKEIPFSNEKRYVYRLFMEYICNDDEGTDIQFNSTALVLGDRKNKLKGLVSIIKTNNAPVRYEVFKKKKKQTLGIRVNDYSLKTRMKYFIKGKKKRLVSKIKKITKMRNKLITKTYKSLFMMASRMPVKRKTVIFESFNGKQYSCNPRAIYEYMRENHPEYKMYWSVNKQYSAPFDEKGIPYINRLSLKWLFAMARAEYWVVNSRLPLWIPKPSHTTYLQTWHGTPLKRLAMDMEEVHMPGTNTKKYKRNFIKEASNWDYLISPNGYSTEIFTRAFQFNKTMIESGYPRNDFLHNDNNEETISLIKSRLNIPRDKKVILYAPTWRDDQFYAKGRYKFDLDLDLHQLRQELGNEYIVILRMHYLVAENFDLGPFEGFAYDFSAYEDIRELYMVSDLLITDYSSVFFDFANLKRPMLFFVPDIETYRDKLRGFYFDFEKEAPGPLVKTTEETIEAIKQISSPDYKLPVSFGPFYDKFCYLESGRSSEKVVNTVFKAE.

CDP-glycerol is bound by residues 473-477 (WHGTP), Arg-540, 573-574 (PT), 610-612 (RMH), 652-653 (SS), and Asp-657.

This sequence belongs to the CDP-glycerol glycerophosphotransferase family.

It is found in the cell membrane. The catalysed reaction is 4-O-[(2R)-glycerylphospho]-N-acetyl-beta-D-mannosaminyl-(1-&gt;4)-N-acetyl-alpha-D-glucosaminyl di-trans,octa-cis-undecaprenyl diphosphate + n CDP-glycerol = 4-O-{[(2R)-1-glycerylphospho](n)-(2R)-1-glycerylphospho}-N-acetyl-beta-D-mannosaminyl-(1-&gt;4)-N-acetyl-alpha-D-glucosaminyl undecaprenyl diphosphate + n CMP + n H(+). It participates in cell wall biogenesis; poly(glycerol phosphate) teichoic acid biosynthesis. Its function is as follows. Responsible for the polymerization of the main chain of the major teichoic acid by sequential transfer of glycerol phosphate units from CDP-glycerol to the disaccharide linkage unit. Synthesizes polymers of approximately 35 glycerol phosphate units in length. The protein is Teichoic acid poly(glycerol phosphate) polymerase (tagF) of Bacillus subtilis (strain 168).